Reading from the N-terminus, the 198-residue chain is Transcription factor IND (198 aa).

The segment at 1–33 (MENGMYKKKGVCDSCVSSKSRSNHSPKRSMMEP) is disordered. One can recognise a bHLH domain in the interval 118–167 (ISDDPQTVVARRRRERISEKIRILKRIVPGGAKMDTASMLDEAIRYTKFL).

In terms of assembly, homodimer. Heterodimer; possibly with ALC. After fertilization, it is expressed in stripes about four cells wide at the margins of developing wild-type fruit. Also expressed in the inner valve layer, which becomes lignified later in fruit development. Detected in roots.

The protein resides in the nucleus. In terms of biological role, transcription regulator required for seed dispersal. Involved in the differentiation of all three cell types required for fruit dehiscence. Acts as the key regulator in a network including SHP and ALC that controls specification of the valve margin. Works with ALC, SHP, and FUL to allow differentiation of the lignified valve layer, the spring-loaded mechanism of fruit that promotes opening. Regulates the expression of the YJ80 marker. This Arabidopsis thaliana (Mouse-ear cress) protein is Transcription factor IND (IND).